Reading from the N-terminus, the 110-residue chain is UPF0060 membrane protein Bamb_1160 (110 aa).

Transmembrane regions (helical) follow at residues alanine 9–leucine 29, proline 34–leucine 54, tyrosine 66–leucine 86, and arginine 88–proline 108.

Belongs to the UPF0060 family.

It localises to the cell inner membrane. The polypeptide is UPF0060 membrane protein Bamb_1160 (Burkholderia ambifaria (strain ATCC BAA-244 / DSM 16087 / CCUG 44356 / LMG 19182 / AMMD) (Burkholderia cepacia (strain AMMD))).